The primary structure comprises 629 residues: Keratin, type II cytoskeletal 3 (629 aa).

The segment at 1-182 (MNRQVCKTSG…DPQIGQVRAQ (182 aa)) is head. A phosphoserine mark is found at S13 and S62. Positions 183–218 (EREQIKTLNNKFASFIDKVRFLEQQNKVLETKWELL) are coil 1A. The IF rod domain maps to 183-498 (EREQIKTLNN…KLLEGEESRM (316 aa)). Residues 219–239 (QRQGPNSVTGTNNLEPLFENR) are linker 1. The tract at residues 240 to 331 (INYLRSYLDS…TLYDAELSQM (92 aa)) is coil 1B. K281 is modified (N6,N6-dimethyllysine). Positions 332–355 (QSHVSDMSVVLSMDNNRSLDLDSI) are linker 12. S349 is modified (phosphoserine). The coil 2 stretch occupies residues 356 to 494 (IAEVRAQYED…ATYRKLLEGE (139 aa)). The tail stretch occupies residues 495-629 (ESRMSGECQS…FSQSSQRYSR (135 aa)). The interval 603-629 (SGGGFSSGSSSRGSSVKFSQSSQRYSR) is disordered. Over residues 618 to 629 (VKFSQSSQRYSR) the composition is skewed to polar residues.

It belongs to the intermediate filament family. As to quaternary structure, heterotetramer of two type I and two type II keratins. Keratin-3 associates with keratin-12. In terms of tissue distribution, cornea specific. Expressed in the basal cells of corneal epithelium and stroma. Also expressed in esophageal epithelium.

This is Keratin, type II cytoskeletal 3 (KRT3) from Oryctolagus cuniculus (Rabbit).